An 832-amino-acid polypeptide reads, in one-letter code: Regulator of drug sensitivity 1 (832 aa).

A DNA-binding region (zn(2)-C6 fungal-type) is located at residues 15–42; the sequence is CLQCKKIKRKCDKLRPACSRCQQNSLQC.

The protein localises to the nucleus. Functionally, zinc cluster transcription factor involved in resistance to cycloheximide. The polypeptide is Regulator of drug sensitivity 1 (RDS1) (Saccharomyces cerevisiae (strain ATCC 204508 / S288c) (Baker's yeast)).